We begin with the raw amino-acid sequence, 345 residues long: S-adenosylmethionine:tRNA ribosyltransferase-isomerase (345 aa).

This sequence belongs to the QueA family. Monomer.

It localises to the cytoplasm. It catalyses the reaction 7-aminomethyl-7-carbaguanosine(34) in tRNA + S-adenosyl-L-methionine = epoxyqueuosine(34) in tRNA + adenine + L-methionine + 2 H(+). Its pathway is tRNA modification; tRNA-queuosine biosynthesis. Its function is as follows. Transfers and isomerizes the ribose moiety from AdoMet to the 7-aminomethyl group of 7-deazaguanine (preQ1-tRNA) to give epoxyqueuosine (oQ-tRNA). This Anaeromyxobacter sp. (strain K) protein is S-adenosylmethionine:tRNA ribosyltransferase-isomerase.